We begin with the raw amino-acid sequence, 141 residues long: Acetyltransferase YpeA (141 aa).

Positions 1–141 (MEIRVFRQED…GKRLIEDEEY (141 aa)) constitute an N-acetyltransferase domain.

The protein belongs to the acetyltransferase family. YpeA subfamily.

This Salmonella choleraesuis (strain SC-B67) protein is Acetyltransferase YpeA.